Consider the following 86-residue polypeptide: Putative defensin-like protein 211 (86 aa).

The N-terminal stretch at 1 to 19 is a signal peptide; it reads MNTIVLFLTLLILVSSCTS. 3 disulfide bridges follow: Cys55/Cys72, Cys58/Cys77, and Cys62/Cys79.

It belongs to the DEFL family.

Its subcellular location is the secreted. The sequence is that of Putative defensin-like protein 211 from Arabidopsis thaliana (Mouse-ear cress).